The following is a 195-amino-acid chain: AP-4-A phosphorylase (195 aa).

A compositionally biased stretch (basic and acidic residues) spans 1–17 (MSDEDRTDRATEDHTIF). Residues 1-20 (MSDEDRTDRATEDHTIFDRG) are disordered. Residues 57 to 166 (PFTEIPQLSD…VPRWGGDANF (110 aa)) enclose the HIT domain. Residues 151–155 (HLHVH) carry the Histidine triad motif motif. His153 functions as the Tele-AMP-histidine intermediate in the catalytic mechanism.

In terms of assembly, homotetramer. It depends on a divalent metal cation as a cofactor.

The catalysed reaction is ADP + ATP + H(+) = P(1),P(4)-bis(5'-adenosyl) tetraphosphate + phosphate. In terms of biological role, catabolizes diadenosine 5',5'''-P1,P4-tetraphosphate (Ap4A) into ADP and ATP. The polypeptide is AP-4-A phosphorylase (Mycobacterium tuberculosis (strain CDC 1551 / Oshkosh)).